Here is a 409-residue protein sequence, read N- to C-terminus: Peptidase T (409 aa).

His-78 is a Zn(2+) binding site. The active site involves Asp-80. Asp-140 contacts Zn(2+). Glu-173 acts as the Proton acceptor in catalysis. 3 residues coordinate Zn(2+): Glu-174, Asp-196, and His-379.

The protein belongs to the peptidase M20B family. The cofactor is Zn(2+).

The protein resides in the cytoplasm. The enzyme catalyses Release of the N-terminal residue from a tripeptide.. Its function is as follows. Cleaves the N-terminal amino acid of tripeptides. This is Peptidase T from Salmonella paratyphi C (strain RKS4594).